Here is a 228-residue protein sequence, read N- to C-terminus: Protein crossbronx homolog (228 aa).

In terms of domain architecture, UBC core spans 14-168 (LQEYKILAEY…VEQCVEDSQR (155 aa)).

Belongs to the ubiquitin-conjugating enzyme family. FTS subfamily.

The sequence is that of Protein crossbronx homolog from Anopheles gambiae (African malaria mosquito).